The sequence spans 559 residues: Apolipoprotein N-acyltransferase 2 (559 aa).

A run of 6 helical transmembrane segments spans residues 27-47 (LAGS…GFLL), 53-73 (HVAC…SFWL), 86-106 (ASTV…ACIL), 114-134 (ACAF…GILA), 153-173 (IADI…NACV), and 187-207 (VPVF…SLYG). Residues 221-507 (LALAIVQQNA…SAVLHVPVYP (287 aa)) enclose the CN hydrolase domain. The active-site Proton acceptor is the E288. K358 is a catalytic residue. Residue C416 is the Nucleophile of the active site. A helical membrane pass occupies residues 519–539 (WVIVLCALIFFAEGVRMAVHT).

Belongs to the CN hydrolase family. Apolipoprotein N-acyltransferase subfamily.

Its subcellular location is the cell inner membrane. It catalyses the reaction N-terminal S-1,2-diacyl-sn-glyceryl-L-cysteinyl-[lipoprotein] + a glycerophospholipid = N-acyl-S-1,2-diacyl-sn-glyceryl-L-cysteinyl-[lipoprotein] + a 2-acyl-sn-glycero-3-phospholipid + H(+). It participates in protein modification; lipoprotein biosynthesis (N-acyl transfer). Functionally, catalyzes the phospholipid dependent N-acylation of the N-terminal cysteine of apolipoprotein, the last step in lipoprotein maturation. The polypeptide is Apolipoprotein N-acyltransferase 2 (Treponema pallidum (strain Nichols)).